The chain runs to 614 residues: Jacalin-related lectin 14 (614 aa).

4 Jacalin-type lectin domains span residues Val27 to Trp169, Pro172 to Thr314, Pro317 to Pro462, and Ala468 to Pro611.

It belongs to the jacalin lectin family.

The polypeptide is Jacalin-related lectin 14 (JAL14) (Arabidopsis thaliana (Mouse-ear cress)).